Here is a 764-residue protein sequence, read N- to C-terminus: 5-methyltetrahydropteroyltriglutamate--homocysteine methyltransferase (764 aa).

Residues 16–19 (RELK) and K121 each bind 5-methyltetrahydropteroyltri-L-glutamate. Residues 440-442 (IGS) and E493 contribute to the L-homocysteine site. Residues 440 to 442 (IGS) and E493 contribute to the L-methionine site. Residues 524-525 (RC) and W570 each bind 5-methyltetrahydropteroyltri-L-glutamate. Position 608 (D608) interacts with L-homocysteine. D608 is a binding site for L-methionine. Residue E614 coordinates 5-methyltetrahydropteroyltri-L-glutamate. Zn(2+) is bound by residues H650, C652, and E674. Catalysis depends on H703, which acts as the Proton donor. C735 serves as a coordination point for Zn(2+).

The protein belongs to the vitamin-B12 independent methionine synthase family. The cofactor is Zn(2+).

The enzyme catalyses 5-methyltetrahydropteroyltri-L-glutamate + L-homocysteine = tetrahydropteroyltri-L-glutamate + L-methionine. Its pathway is amino-acid biosynthesis; L-methionine biosynthesis via de novo pathway; L-methionine from L-homocysteine (MetE route): step 1/1. Its function is as follows. Catalyzes the transfer of a methyl group from 5-methyltetrahydrofolate to homocysteine resulting in methionine formation. In Burkholderia lata (strain ATCC 17760 / DSM 23089 / LMG 22485 / NCIMB 9086 / R18194 / 383), this protein is 5-methyltetrahydropteroyltriglutamate--homocysteine methyltransferase.